The primary structure comprises 430 residues: MDLLSDIEKQLQKATAQAFLIALSGGLDSTVLLSLFAKLCQKQPHLQILSLRAIHIHHGLSPNADSWAKHCQDLCDQFQIPLIIERVQVDKTNGIEAGAREARYQAIKKHLQTQEMLVTAHHLNDQTETFFLALKRGSGLQGLGAMQQQSVLFGMQILRPLLGFTRPQLEDYAQKEKLNWITDESNKDNRFDRNFLRNEILPELRARWAYFDLAVQRSAQHCFEQQQLINDLLSEAFAEHCQIKNQFKLCQFRKYSLAKQTALLRMWLAENQLEMPSKRQLTQLINDVVFAKEEANPQFQLVNKIIRRYQDRLYLTKPFSDLTKYCLKLEQNTLSLPDDLGNLSVQENEHNLIFHWQDFSVTLEKTDLPISIRFGYSGKVKHHPKRPREDIKKIWQELGVPPWERNRIPLIFYGNELKSAVGFFRVFDEY.

Residue serine 24–serine 29 participates in ATP binding.

This sequence belongs to the tRNA(Ile)-lysidine synthase family.

The protein resides in the cytoplasm. It carries out the reaction cytidine(34) in tRNA(Ile2) + L-lysine + ATP = lysidine(34) in tRNA(Ile2) + AMP + diphosphate + H(+). Its function is as follows. Ligates lysine onto the cytidine present at position 34 of the AUA codon-specific tRNA(Ile) that contains the anticodon CAU, in an ATP-dependent manner. Cytidine is converted to lysidine, thus changing the amino acid specificity of the tRNA from methionine to isoleucine. The polypeptide is tRNA(Ile)-lysidine synthase (Haemophilus influenzae (strain PittGG)).